Reading from the N-terminus, the 132-residue chain is Small ribosomal subunit protein uS8 (132 aa).

Belongs to the universal ribosomal protein uS8 family. As to quaternary structure, part of the 30S ribosomal subunit. Contacts proteins S5 and S12.

Functionally, one of the primary rRNA binding proteins, it binds directly to 16S rRNA central domain where it helps coordinate assembly of the platform of the 30S subunit. The polypeptide is Small ribosomal subunit protein uS8 (Gluconobacter oxydans (strain 621H) (Gluconobacter suboxydans)).